The sequence spans 441 residues: Ribosomal protein uS12 methylthiotransferase RimO (441 aa).

An MTTase N-terminal domain is found at 8–118 (PKIGFVSLGC…VLEHVHHYVP (111 aa)). C17, C53, C82, C150, C154, and C157 together coordinate [4Fe-4S] cluster. Residues 136-373 (LTPRHYAYLK…MQLQQQISAE (238 aa)) form the Radical SAM core domain. A TRAM domain is found at 376-441 (QEKVGREILV…DEYDLWGSRV (66 aa)).

Belongs to the methylthiotransferase family. RimO subfamily. [4Fe-4S] cluster serves as cofactor.

The protein localises to the cytoplasm. The catalysed reaction is L-aspartate(89)-[ribosomal protein uS12]-hydrogen + (sulfur carrier)-SH + AH2 + 2 S-adenosyl-L-methionine = 3-methylsulfanyl-L-aspartate(89)-[ribosomal protein uS12]-hydrogen + (sulfur carrier)-H + 5'-deoxyadenosine + L-methionine + A + S-adenosyl-L-homocysteine + 2 H(+). Catalyzes the methylthiolation of an aspartic acid residue of ribosomal protein uS12. In Shigella boydii serotype 18 (strain CDC 3083-94 / BS512), this protein is Ribosomal protein uS12 methylthiotransferase RimO.